The sequence spans 391 residues: Suppressor APC domain-containing protein 2 (391 aa).

A disordered region spans residues 1–20 (MAVAAMAERGRLSHAAPAPS). Position 218 is a phosphothreonine (Thr218). Residues 226-277 (SLLKQMKELDQEQEVLLQGLEMMARGRDWYQQQLQRVQERQRRLSQSRAAAD) adopt a coiled-coil conformation. Position 283 is a phosphoserine (Ser283). The stretch at 340–381 (LKEQNRLLTQEVTDKSERITQLEQEKSALIKQLFEARALSQQ) forms a coiled coil.

As to quaternary structure, interacts with a spindle orientation complex at least composed of GNAI1, GPSM2 and NUMA1. Interacts with GPSM2 (via TPR motifs); this interaction is required to prevent GPSM2 anchoring at the mitotic apical cortex and is inhibited in presence of NUMA1 in a dose dependent manner. Interacts with PARD3. Expressed in the retina. Expressed in retinal progenitor cells and newly differentiated neurons but not in mature retinal cells (at protein level).

The protein resides in the cytoplasm. It is found in the nucleus. Its subcellular location is the cell cortex. The protein localises to the apical cell membrane. It localises to the cell junction. The protein resides in the tight junction. Functionally, plays a role in planar mitotic spindle orientation in retinal progenitor cells (RPCs) and promotes the production of symmetric terminal divisions. Negatively regulates the mitotic apical cortex localization of GPSM2. Involved also in positive regulation of cell proliferation and tumor cell growth. In Mus musculus (Mouse), this protein is Suppressor APC domain-containing protein 2.